A 687-amino-acid polypeptide reads, in one-letter code: MAALRPARTSVAEKKTFKLHALSAVVMGLCASGQAYAQTESTNSNKKEEMPVVVVIGEKTERTIYDTSSSVQVFDQETIDNTPGATEIDDLLQLIPNMVDSGQGNSMPTVRGIDGSGPSIGGLASFAGTSPRLNMSIDGRSLTYSEIAFGPRSLWDMQQVEVYLGPQSYIQGRNASAGAIVMKTNDPTHHFESAVKAGVGERNYSQTAAMISAPIIQDELAFRLSFDQQKRDSFVDLASYEPAGDAKKIEMNSVRGKLLYEPSALAGFKTTLGVSHMDSRGPQSESTNVVGNEAFRPVYETKSLSTAWDISWQLNEVLTFENNLVYSKFAFDRYTNPLQKGDYTAEGKEFHVEPLLRYLSLGGRVNALVGARYYKSSQDDEYVDATSANPMSGSTKTQSAFAELTYALTQSIDVTVAGRYEKERVKRKVSDPRFKLDHDDTLSVFLPKFDIAFKPDMAQTFGFKVAKGYNSGGAGLAFNPILGGGFSPYQFEEEYIWNYEFYTRHRLGNSVELMTNTFYNDFDSMQMTQTLSNGDVLIANLDNAKTYGAEIGTRWYATDSLELFANLGLLKTEYKEVNGTSKELERAPNMTGNLGGQYSFFDGFELSANAAYTGDYFSDRSNTEIVKIDAYWVANAQLAYVFENGRAALFATNLFDSDKTTLYARGSLNEPLKQQPRMIGASLQLNF.

Residues 1 to 37 (MAALRPARTSVAEKKTFKLHALSAVVMGLCASGQAYA) form the signal peptide. The region spanning 63 to 185 (TIYDTSSSVQ…SAGAIVMKTN (123 aa)) is the TBDR plug domain. Residues 190–687 (HFESAVKAGV…MIGASLQLNF (498 aa)) enclose the TBDR beta-barrel domain. The TonB C-terminal box signature appears at 670–687 (EPLKQQPRMIGASLQLNF).

Belongs to the TonB-dependent receptor family.

The protein resides in the cell outer membrane. Its function is as follows. Involved in the uptake of iron in complex with vulnibactin, a catecholate siderophore synthesized by V.vulnificus. Binds and transports ferric vulnibactin across the outer membrane. The energy source is provided by the inner membrane TonB system. This Vibrio vulnificus protein is Ferric vulnibactin receptor VuuA.